Here is a 407-residue protein sequence, read N- to C-terminus: 1-deoxy-D-xylulose 5-phosphate reductoisomerase (407 aa).

The NADPH site is built by Thr25, Gly26, Ser27, Ile28, Asn53, and Asn136. Lys137 contributes to the 1-deoxy-D-xylulose 5-phosphate binding site. Glu138 is a binding site for NADPH. Residue Asp162 participates in Mn(2+) binding. The 1-deoxy-D-xylulose 5-phosphate site is built by Ser163, Glu164, Ser188, and His211. Residue Glu164 coordinates Mn(2+). NADPH is bound at residue Gly217. 1-deoxy-D-xylulose 5-phosphate is bound by residues Ser224, Asn229, Lys230, and Glu233. Glu233 provides a ligand contact to Mn(2+).

This sequence belongs to the DXR family. The cofactor is Mg(2+). Mn(2+) serves as cofactor.

The enzyme catalyses 2-C-methyl-D-erythritol 4-phosphate + NADP(+) = 1-deoxy-D-xylulose 5-phosphate + NADPH + H(+). It functions in the pathway isoprenoid biosynthesis; isopentenyl diphosphate biosynthesis via DXP pathway; isopentenyl diphosphate from 1-deoxy-D-xylulose 5-phosphate: step 1/6. Its function is as follows. Catalyzes the NADPH-dependent rearrangement and reduction of 1-deoxy-D-xylulose-5-phosphate (DXP) to 2-C-methyl-D-erythritol 4-phosphate (MEP). The polypeptide is 1-deoxy-D-xylulose 5-phosphate reductoisomerase (Rhodopseudomonas palustris (strain HaA2)).